The chain runs to 218 residues: tRNA (guanosine(18)-2'-O)-methyltransferase (218 aa).

2 residues coordinate S-adenosyl-L-methionine: Thr111 and Ile154.

Belongs to the class IV-like SAM-binding methyltransferase superfamily. RNA methyltransferase TrmH family.

It carries out the reaction guanosine(18) in tRNA + S-adenosyl-L-methionine = 2'-O-methylguanosine(18) in tRNA + S-adenosyl-L-homocysteine + H(+). Functionally, catalyzes the 2'-O methylation of guanosine at position 18 in tRNA. This is tRNA (guanosine(18)-2'-O)-methyltransferase from Borreliella burgdorferi (strain ATCC 35210 / DSM 4680 / CIP 102532 / B31) (Borrelia burgdorferi).